Reading from the N-terminus, the 592-residue chain is Aspartate--tRNA ligase (592 aa).

Residue Glu176 coordinates L-aspartate. Residues 200–203 (QIFK) form an aspartate region. Arg222 lines the L-aspartate pocket. Residues 222–224 (RDE) and Gln231 contribute to the ATP site. His450 provides a ligand contact to L-aspartate. Glu484 serves as a coordination point for ATP. Position 491 (Arg491) interacts with L-aspartate. 536–539 (GLDR) serves as a coordination point for ATP.

It belongs to the class-II aminoacyl-tRNA synthetase family. Type 1 subfamily. Homodimer.

It localises to the cytoplasm. It carries out the reaction tRNA(Asp) + L-aspartate + ATP = L-aspartyl-tRNA(Asp) + AMP + diphosphate. Its function is as follows. Catalyzes the attachment of L-aspartate to tRNA(Asp) in a two-step reaction: L-aspartate is first activated by ATP to form Asp-AMP and then transferred to the acceptor end of tRNA(Asp). The chain is Aspartate--tRNA ligase from Macrococcus caseolyticus (strain JCSC5402) (Macrococcoides caseolyticum).